The chain runs to 496 residues: Glutamate--tRNA ligase (496 aa).

A 'HIGH' region motif is present at residues Pro-11–Asn-21. The short motif at Lys-255–Arg-259 is the 'KMSKS' region element. Lys-258 is an ATP binding site.

This sequence belongs to the class-I aminoacyl-tRNA synthetase family. Glutamate--tRNA ligase type 1 subfamily. In terms of assembly, monomer.

It localises to the cytoplasm. It carries out the reaction tRNA(Glu) + L-glutamate + ATP = L-glutamyl-tRNA(Glu) + AMP + diphosphate. In terms of biological role, catalyzes the attachment of glutamate to tRNA(Glu) in a two-step reaction: glutamate is first activated by ATP to form Glu-AMP and then transferred to the acceptor end of tRNA(Glu). This chain is Glutamate--tRNA ligase, found in Streptococcus pyogenes serotype M49 (strain NZ131).